We begin with the raw amino-acid sequence, 97 residues long: UPF0235 protein HAPS_1504 (97 aa).

This sequence belongs to the UPF0235 family.

The chain is UPF0235 protein HAPS_1504 from Glaesserella parasuis serovar 5 (strain SH0165) (Haemophilus parasuis).